We begin with the raw amino-acid sequence, 102 residues long: Large ribosomal subunit protein uL24 (102 aa).

It belongs to the universal ribosomal protein uL24 family. In terms of assembly, part of the 50S ribosomal subunit.

In terms of biological role, one of two assembly initiator proteins, it binds directly to the 5'-end of the 23S rRNA, where it nucleates assembly of the 50S subunit. Its function is as follows. One of the proteins that surrounds the polypeptide exit tunnel on the outside of the subunit. This Rhizobium johnstonii (strain DSM 114642 / LMG 32736 / 3841) (Rhizobium leguminosarum bv. viciae) protein is Large ribosomal subunit protein uL24.